Reading from the N-terminus, the 546-residue chain is CTP synthase (546 aa).

Residues 1–264 are amidoligase domain; it reads MRYIVVTGGV…TKYIMKAMRL (264 aa). Residue S12 participates in CTP binding. S12 serves as a coordination point for UTP. ATP is bound by residues 13 to 18 and D70; that span reads GLGKGI. Mg(2+) contacts are provided by D70 and E140. Residues 147–149, 185–190, and K221 contribute to the CTP site; these read DIE and KTKPTQ. UTP-binding positions include 185–190 and K221; that span reads KTKPTQ. A Glutamine amidotransferase type-1 domain is found at 298–534; the sequence is GSQCTDPMKD…VEAMKAQRLR (237 aa). G357 provides a ligand contact to L-glutamine. C384 acts as the Nucleophile; for glutamine hydrolysis in catalysis. L-glutamine contacts are provided by residues 385–388, E408, and R464; that span reads FGMQ. Residues H507 and E509 contribute to the active site.

The protein belongs to the CTP synthase family. Homotetramer.

The catalysed reaction is UTP + L-glutamine + ATP + H2O = CTP + L-glutamate + ADP + phosphate + 2 H(+). The enzyme catalyses L-glutamine + H2O = L-glutamate + NH4(+). It catalyses the reaction UTP + NH4(+) + ATP = CTP + ADP + phosphate + 2 H(+). It participates in pyrimidine metabolism; CTP biosynthesis via de novo pathway; CTP from UDP: step 2/2. Allosterically activated by GTP, when glutamine is the substrate; GTP has no effect on the reaction when ammonia is the substrate. The allosteric effector GTP functions by stabilizing the protein conformation that binds the tetrahedral intermediate(s) formed during glutamine hydrolysis. Inhibited by the product CTP, via allosteric rather than competitive inhibition. Its function is as follows. Catalyzes the ATP-dependent amination of UTP to CTP with either L-glutamine or ammonia as the source of nitrogen. Regulates intracellular CTP levels through interactions with the four ribonucleotide triphosphates. This Methanothrix thermoacetophila (strain DSM 6194 / JCM 14653 / NBRC 101360 / PT) (Methanosaeta thermophila) protein is CTP synthase.